A 406-amino-acid polypeptide reads, in one-letter code: Enoyl-[acyl-carrier-protein] reductase [NADH] (406 aa).

NAD(+) is bound by residues 48–53, 74–75, 111–112, and 140–141; these read GASTGF, FE, DA, and IA. Tyr226 contributes to the substrate binding site. The active-site Proton donor is Tyr236. Residues Lys245 and 275-277 each bind NAD(+); that span reads LVT.

It belongs to the TER reductase family. In terms of assembly, monomer.

The catalysed reaction is a 2,3-saturated acyl-[ACP] + NAD(+) = a (2E)-enoyl-[ACP] + NADH + H(+). It functions in the pathway lipid metabolism; fatty acid biosynthesis. In terms of biological role, involved in the final reduction of the elongation cycle of fatty acid synthesis (FAS II). Catalyzes the reduction of a carbon-carbon double bond in an enoyl moiety that is covalently linked to an acyl carrier protein (ACP). The chain is Enoyl-[acyl-carrier-protein] reductase [NADH] from Coxiella burnetii (strain Dugway 5J108-111).